The sequence spans 376 residues: Putative endoglucanase type K (376 aa).

Residues 1–18 (MRSYTLLALAGPLAVSAA) form the signal peptide. A catalytic region spans residues 19 to 308 (SGSGHSTRYW…ATKPAQPVNK (290 aa)). Aspartate 29 serves as the catalytic Nucleophile. Residue aspartate 140 is the Proton donor of the active site. Residues 229-332 (AFKGDTSASK…SCPAKTDATA (104 aa)) are disordered. 2 stretches are compositionally biased toward low complexity: residues 235–258 (SASK…AQPQ) and 291–306 (KPVA…AQPV). The interval 309–338 (PKTTQKVRGTKTRGSCPAKTDATAKASVVP) is linker. Positions 335–374 (SVVPAYYQCGGSKSAYPNGNLACATGSKCVKQNEYYSQCV) constitute a CBM1 domain.

Belongs to the glycosyl hydrolase 45 (cellulase K) family.

It carries out the reaction Endohydrolysis of (1-&gt;4)-beta-D-glucosidic linkages in cellulose, lichenin and cereal beta-D-glucans.. The polypeptide is Putative endoglucanase type K (Fusarium oxysporum (Fusarium vascular wilt)).